Consider the following 535-residue polypeptide: Light-independent protochlorophyllide reductase subunit B (535 aa).

Aspartate 36 provides a ligand contact to [4Fe-4S] cluster. The Proton donor role is filled by aspartate 292. 428 to 429 (GL) is a substrate binding site.

It belongs to the ChlB/BchB/BchZ family. In terms of assembly, protochlorophyllide reductase is composed of three subunits; BchL, BchN and BchB. Forms a heterotetramer of two BchB and two BchN subunits. [4Fe-4S] cluster is required as a cofactor.

The enzyme catalyses chlorophyllide a + oxidized 2[4Fe-4S]-[ferredoxin] + 2 ADP + 2 phosphate = protochlorophyllide a + reduced 2[4Fe-4S]-[ferredoxin] + 2 ATP + 2 H2O. Its pathway is porphyrin-containing compound metabolism; bacteriochlorophyll biosynthesis (light-independent). Its function is as follows. Component of the dark-operative protochlorophyllide reductase (DPOR) that uses Mg-ATP and reduced ferredoxin to reduce ring D of protochlorophyllide (Pchlide) to form chlorophyllide a (Chlide). This reaction is light-independent. The NB-protein (BchN-BchB) is the catalytic component of the complex. This chain is Light-independent protochlorophyllide reductase subunit B, found in Pelodictyon phaeoclathratiforme (strain DSM 5477 / BU-1).